The chain runs to 94 residues: Protein translocase subunit SecE (94 aa).

The segment at 1 to 32 (MTDAVGSIDTPDAQDEVPESKKTRKGGKRAKK) is disordered. Residues 22-32 (KTRKGGKRAKK) show a composition bias toward basic residues. A helical membrane pass occupies residues 59–81 (QLTSYTTVVIFFVAIMIRLVTVI).

This sequence belongs to the SecE/SEC61-gamma family. Component of the Sec protein translocase complex. Heterotrimer consisting of SecY, SecE and SecG subunits. The heterotrimers can form oligomers, although 1 heterotrimer is thought to be able to translocate proteins. Interacts with the ribosome. Interacts with SecDF, and other proteins may be involved. Interacts with SecA.

The protein resides in the cell membrane. Essential subunit of the Sec protein translocation channel SecYEG. Clamps together the 2 halves of SecY. May contact the channel plug during translocation. This Streptomyces galbus protein is Protein translocase subunit SecE.